Here is a 327-residue protein sequence, read N- to C-terminus: Zinc transport protein ZntB (327 aa).

The Cytoplasmic segment spans residues 1–273 (MEGIKGSEVN…SRRTYTMSLM (273 aa)). A helical membrane pass occupies residues 274-294 (AMVFLPSTFLTGLFGVNLGGI). At 295–300 (PGGGYQ) the chain is on the periplasmic side. The chain crosses the membrane as a helical span at residues 301 to 321 (FGFSAFCIMLVVLIGGVAWWL). Residues 322–327 (HRSKWL) are Cytoplasmic-facing.

The protein belongs to the CorA metal ion transporter (MIT) (TC 1.A.35) family.

Its subcellular location is the cell inner membrane. The catalysed reaction is Zn(2+)(out) + H(+)(out) = Zn(2+)(in) + H(+)(in). Functionally, zinc transporter. Acts as a Zn(2+):proton symporter, which likely mediates zinc ion uptake. This chain is Zinc transport protein ZntB, found in Enterobacter sp. (strain 638).